Here is a 553-residue protein sequence, read N- to C-terminus: Arginine--tRNA ligase (553 aa).

The short motif at Ala-130–His-140 is the 'HIGH' region element.

This sequence belongs to the class-I aminoacyl-tRNA synthetase family. Monomer.

The protein localises to the cytoplasm. It catalyses the reaction tRNA(Arg) + L-arginine + ATP = L-arginyl-tRNA(Arg) + AMP + diphosphate. The polypeptide is Arginine--tRNA ligase (Staphylococcus epidermidis (strain ATCC 35984 / DSM 28319 / BCRC 17069 / CCUG 31568 / BM 3577 / RP62A)).